The chain runs to 307 residues: Phosphoribosylaminoimidazole-succinocarboxamide synthase (307 aa).

This sequence belongs to the SAICAR synthetase family.

The catalysed reaction is 5-amino-1-(5-phospho-D-ribosyl)imidazole-4-carboxylate + L-aspartate + ATP = (2S)-2-[5-amino-1-(5-phospho-beta-D-ribosyl)imidazole-4-carboxamido]succinate + ADP + phosphate + 2 H(+). Its pathway is purine metabolism; IMP biosynthesis via de novo pathway; 5-amino-1-(5-phospho-D-ribosyl)imidazole-4-carboxamide from 5-amino-1-(5-phospho-D-ribosyl)imidazole-4-carboxylate: step 1/2. The polypeptide is Phosphoribosylaminoimidazole-succinocarboxamide synthase (Thermobifida fusca (strain YX)).